Reading from the N-terminus, the 187-residue chain is Protein McbG (187 aa).

Belongs to the pentapeptide repeat protein family.

Its function is as follows. Together with proteins McbE and McbF this protein causes immunity to the peptide antibiotic microcin B17 (MccB17), which inhibits DNA replication in Enterobacteriaceae by induction of the SOS repair system. McbG alone can provide some protection. In Escherichia coli, this protein is Protein McbG (mcbG).